A 214-amino-acid chain; its full sequence is uncharacterized protein (214 aa).

This is an uncharacterized protein from Methanocaldococcus jannaschii (strain ATCC 43067 / DSM 2661 / JAL-1 / JCM 10045 / NBRC 100440) (Methanococcus jannaschii).